Reading from the N-terminus, the 360-residue chain is MVDIIFHYPFLGAMGDHSKKKPGTAMCVGCGSQIHDQFILRVSPDLEWHAACLKCAECSQYLDETCTCFVRDGKTYCKRDYVRLFGIKCAQCQVGFSSSDLVMRARDSVYHIECFRCSVCSRQLLPGDEFSLREHELLCRADHGLLLERAAAGSPRSPGPLPGTPPGLHLPDAGSGQQVSLRTHVHKQAEKTTRVRTVLNEKQLHTLRTCYAANPRPDALMKEQLVEMTGLSPRVIRVWFQNKRCKDKKKSILMKQLQQQQHSDKASLQGLTGTLLVAGSPSAHENAVQGSAVEVQTYQPPWKALSEFALQSDLDQPAFQQLVSFSESGSLGNSSGSDVTSLSSQLPDTPNSMVPSPVET.

LIM zinc-binding domains are found at residues 25–86 and 87–149; these read AMCV…RLFG and IKCA…LLER. The segment at 151-177 is disordered; the sequence is AAGSPRSPGPLPGTPPGLHLPDAGSGQ. Phosphoserine occurs at positions 154 and 157. The segment at residues 192–251 is a DNA-binding region (homeobox); the sequence is TTRVRTVLNEKQLHTLRTCYAANPRPDALMKEQLVEMTGLSPRVIRVWFQNKRCKDKKKS. The tract at residues 273–302 is LIM-binding domain (LID); sequence GTLLVAGSPSAHENAVQGSAVEVQTYQPPW. Ser280 is subject to Phosphoserine. The segment covering 328–337 has biased composition (low complexity); that stretch reads SGSLGNSSGS. The disordered stretch occupies residues 328–360; it reads SGSLGNSSGSDVTSLSSQLPDTPNSMVPSPVET. Residues 338 to 360 show a composition bias toward polar residues; sequence DVTSLSSQLPDTPNSMVPSPVET.

As to quaternary structure, interacts with LHX4.

Its subcellular location is the nucleus. Functionally, transcriptional factor that defines subclasses of motoneurons that segregate into columns in the spinal cord and select distinct axon pathways. This chain is Insulin gene enhancer protein ISL-2 (Isl2), found in Rattus norvegicus (Rat).